A 274-amino-acid polypeptide reads, in one-letter code: SWI/SNF chromatin-remodeling complex subunit snf30 (274 aa).

Polar residues-rich tracts occupy residues Thr123 to Gln150 and Pro157 to Ser167. Positions Thr123 to Ser167 are disordered.

As to quaternary structure, component of the SWI/SNF global transcription activator complex composed of at least arp9, arp42, snf5, snf22, snf30, sbf59, sol1, ssr1, ssr2, ssr3, ssr4 and tfg3.

It localises to the cytoplasm. The protein localises to the nucleus. Functionally, component of the SWI/SNF complex, an ATP-dependent chromatin remodeling complex, required for the positive and negative regulation of gene expression of a large number of genes. It changes chromatin structure by altering DNA-histone contacts within a nucleosome, leading eventually to a change in nucleosome position, thus facilitating or repressing binding of gene-specific transcription factors. The sequence is that of SWI/SNF chromatin-remodeling complex subunit snf30 (snf30) from Schizosaccharomyces pombe (strain 972 / ATCC 24843) (Fission yeast).